Consider the following 238-residue polypeptide: Peptidyl-tRNA hydrolase (238 aa).

Y14 serves as a coordination point for tRNA. Catalysis depends on H19, which acts as the Proton acceptor. The tRNA site is built by F64, N66, and N112. Over residues 190–202 (KTEEPAPKPEKKT) the composition is skewed to basic and acidic residues. The disordered stretch occupies residues 190–225 (KTEEPAPKPEKKTVAKSHIHQARNHNQPRMPESGPM). Residues 203–212 (VAKSHIHQAR) show a composition bias toward basic residues.

Belongs to the PTH family. Monomer.

It is found in the cytoplasm. It carries out the reaction an N-acyl-L-alpha-aminoacyl-tRNA + H2O = an N-acyl-L-amino acid + a tRNA + H(+). Functionally, hydrolyzes ribosome-free peptidyl-tRNAs (with 1 or more amino acids incorporated), which drop off the ribosome during protein synthesis, or as a result of ribosome stalling. Its function is as follows. Catalyzes the release of premature peptidyl moieties from peptidyl-tRNA molecules trapped in stalled 50S ribosomal subunits, and thus maintains levels of free tRNAs and 50S ribosomes. This Rhizobium rhizogenes (strain K84 / ATCC BAA-868) (Agrobacterium radiobacter) protein is Peptidyl-tRNA hydrolase.